Here is a 190-residue protein sequence, read N- to C-terminus: Adenine phosphoribosyltransferase (190 aa).

The protein belongs to the purine/pyrimidine phosphoribosyltransferase family. In terms of assembly, homodimer.

It is found in the cytoplasm. It catalyses the reaction AMP + diphosphate = 5-phospho-alpha-D-ribose 1-diphosphate + adenine. It functions in the pathway purine metabolism; AMP biosynthesis via salvage pathway; AMP from adenine: step 1/1. Functionally, catalyzes a salvage reaction resulting in the formation of AMP, that is energically less costly than de novo synthesis. This Cupriavidus pinatubonensis (strain JMP 134 / LMG 1197) (Cupriavidus necator (strain JMP 134)) protein is Adenine phosphoribosyltransferase.